Reading from the N-terminus, the 270-residue chain is NAD(P)H-hydrate epimerase (270 aa).

Residues 25–234 form the YjeF N-terminal domain; it reads FQQLMDLMQN…DLLAPEAIYQ (210 aa). (6S)-NADPHX is bound at residue 73-77; it reads DNGGQ. K(+)-binding residues include N74 and D144. (6S)-NADPHX is bound by residues 148–154 and E177; that span reads GVGLYGH. T180 contacts K(+).

It belongs to the NnrE/AIBP family. K(+) is required as a cofactor.

It carries out the reaction (6R)-NADHX = (6S)-NADHX. It catalyses the reaction (6R)-NADPHX = (6S)-NADPHX. Functionally, catalyzes the epimerization of the S- and R-forms of NAD(P)HX, a damaged form of NAD(P)H that is a result of enzymatic or heat-dependent hydration. This is a prerequisite for the S-specific NAD(P)H-hydrate dehydratase to allow the repair of both epimers of NAD(P)HX. This is NAD(P)H-hydrate epimerase from Legionella pneumophila serogroup 1 (strain 2300/99 Alcoy).